The sequence spans 447 residues: Dihydroorotase (447 aa).

Residues H81 and H83 each coordinate Zn(2+). Substrate contacts are provided by residues 83–85 (HFR) and N115. Residues D171, H198, and H252 each coordinate Zn(2+). A substrate-binding site is contributed by N298. D325 serves as a coordination point for Zn(2+). The active site involves D325. Residues H329 and 343 to 344 (FG) contribute to the substrate site.

The protein belongs to the metallo-dependent hydrolases superfamily. DHOase family. Class I DHOase subfamily. Zn(2+) serves as cofactor.

The catalysed reaction is (S)-dihydroorotate + H2O = N-carbamoyl-L-aspartate + H(+). The protein operates within pyrimidine metabolism; UMP biosynthesis via de novo pathway; (S)-dihydroorotate from bicarbonate: step 3/3. Its function is as follows. Catalyzes the reversible cyclization of carbamoyl aspartate to dihydroorotate. This chain is Dihydroorotase, found in Ehrlichia canis (strain Jake).